Consider the following 295-residue polypeptide: Acetyl-coenzyme A carboxylase carboxyl transferase subunit beta (295 aa).

The segment at 1 to 20 (MSWLSKLMPSGIRTENTPAK) is disordered. One can recognise a CoA carboxyltransferase N-terminal domain in the interval 28–295 (LWEKCSNCGS…QPHPQDADAA (268 aa)). Zn(2+) contacts are provided by cysteine 32, cysteine 35, cysteine 51, and cysteine 54. The segment at 32–54 (CSNCGSALYGPELEENLEVCPKC) adopts a C4-type zinc-finger fold.

This sequence belongs to the AccD/PCCB family. In terms of assembly, acetyl-CoA carboxylase is a heterohexamer composed of biotin carboxyl carrier protein (AccB), biotin carboxylase (AccC) and two subunits each of ACCase subunit alpha (AccA) and ACCase subunit beta (AccD). It depends on Zn(2+) as a cofactor.

It localises to the cytoplasm. It carries out the reaction N(6)-carboxybiotinyl-L-lysyl-[protein] + acetyl-CoA = N(6)-biotinyl-L-lysyl-[protein] + malonyl-CoA. It participates in lipid metabolism; malonyl-CoA biosynthesis; malonyl-CoA from acetyl-CoA: step 1/1. In terms of biological role, component of the acetyl coenzyme A carboxylase (ACC) complex. Biotin carboxylase (BC) catalyzes the carboxylation of biotin on its carrier protein (BCCP) and then the CO(2) group is transferred by the transcarboxylase to acetyl-CoA to form malonyl-CoA. In Xanthomonas axonopodis pv. citri (strain 306), this protein is Acetyl-coenzyme A carboxylase carboxyl transferase subunit beta.